We begin with the raw amino-acid sequence, 131 residues long: Global transcriptional regulator Spx (131 aa).

Residues cysteine 10 and cysteine 13 are joined by a disulfide bond.

This sequence belongs to the ArsC family. Spx subfamily. As to quaternary structure, interacts with the C-terminal domain of the alpha subunit of the RNAP.

It is found in the cytoplasm. Its function is as follows. Global transcriptional regulator that plays a key role in stress response and exerts either positive or negative regulation of genes. Acts by interacting with the C-terminal domain of the alpha subunit of the RNA polymerase (RNAP). This interaction can enhance binding of RNAP to the promoter region of target genes and stimulate their transcription, or block interaction of RNAP with activator. The sequence is that of Global transcriptional regulator Spx from Shouchella clausii (strain KSM-K16) (Alkalihalobacillus clausii).